We begin with the raw amino-acid sequence, 478 residues long: MNRDSFYPAIACFPLLLMLAGCAPMHETRQALSQQTPAAQVDTALPTALKNGWPDSQWWLEYHDNQLTSLINNALQNAPDMQVAEQRIQLAEAQAKAVATQDGPQIDFSADMERQKMSAEGLMGPFALNDPAAGTTGPWYTNGTFGLTAGWHLDIWGKNRAEVTARLGTVKARAAEREQTRQLLAGSVARLYWEWQTQAALNTVLQQIEKEQNTIIATDRQLYQNGITSSVDGVETDINASKTRQQLNDVAGKMKIIEARLNALTNHQTKSLKLKPVALPKVASQLPDELGYSLLARRADLQAAHWYVESSLSTIDAAKAAFYPDINLMAFLQQDALHLSDLFRHSAQQMGVTAGLTLPIFDSGRLNANLDIAKAESNLSIASYNKAVVEAVNDVARAASQVQTLAEKNQHQAQIERDALRVVGLAQARFNAGIIAGSRVSEARIPALRERANGLLLQGQWLDASIRLTGALGGGYKR.

A signal peptide spans 1-21; that stretch reads MNRDSFYPAIACFPLLLMLAG. A lipid anchor (N-palmitoyl cysteine) is attached at Cys22. A lipid anchor (S-diacylglycerol cysteine) is attached at Cys22.

The protein belongs to the outer membrane factor (OMF) (TC 1.B.17) family.

The protein resides in the cell outer membrane. Its function is as follows. Could be involved in resistance to puromycin, acriflavine and tetraphenylarsonium chloride. The sequence is that of Putative multidrug resistance outer membrane protein MdtQ (mdtQ) from Shigella flexneri.